A 155-amino-acid polypeptide reads, in one-letter code: Lectin-like protein EP153R (155 aa).

Residues 1-30 are Cytoplasmic-facing; the sequence is MYFKKKYIGLIDKNCEKKILDDCTTIKICY. The helical transmembrane segment at 31-51 threads the bilayer; sequence ILIGILIGTNMITLIYNFIFW. The Extracellular segment spans residues 52 to 155; the sequence is DHYMTCNKKD…YLPLLFICSK (104 aa). Cysteine 66 and cysteine 77 form a disulfide bridge. A lectin-like region spans residues 66–154; the sequence is CPKDWVGYNN…KYLPLLFICS (89 aa). N-linked (GlcNAc...) asparagine; by host glycans are attached at residues asparagine 82, asparagine 86, asparagine 98, asparagine 104, asparagine 110, asparagine 124, asparagine 130, and asparagine 137. Residues cysteine 94 and cysteine 153 are joined by a disulfide bond.

Belongs to the asfivirus lectin-like protein family. In terms of assembly, homodimer.

The protein resides in the host endoplasmic reticulum membrane. Functionally, down-regulates MHC-I expression by impairing the appropriate configuration or presentation into the plasma membrane of the latter. Participates in viral hemadsorption, which may help viral spread. Reduces the transactivating activity of host TP53, thus inhibiting apoptosis. Non-essential for virus growth in swine macrophage cell cultures. This Ornithodoros (relapsing fever ticks) protein is Lectin-like protein EP153R.